The sequence spans 391 residues: Ribonuclease 3-like protein 2 (391 aa).

The short motif at proline 7–arginine 26 is the Nuclear export signal element. The RNase III domain occupies methionine 60–asparagine 203. 3 residues coordinate Mg(2+): glutamate 96, aspartate 189, and glutamate 192. DRBM domains lie at glutamate 218–glutamate 294 and histidine 313–lysine 387. A disulfide bond links cysteine 240 and cysteine 322. The short motif at lysine 371–lysine 387 is the Bipartite nuclear localization element.

In terms of assembly, homodimer; disulfide-linked. It depends on Mg(2+) as a cofactor. Mn(2+) is required as a cofactor. Expressed in seeds, leaves and flower buds.

Its subcellular location is the nucleus. The protein resides in the cytoplasm. Functionally, ribonuclease that cleaves double-stranded RNA (dsRNA). Required for 3'-external transcribed spacer (ETS) cleavage of the pre-rRNA precursors. May promote the production of 21 nucleotide small interfering RNA (siRNA) during post-transcriptional gene silencing (PTGS). The chain is Ribonuclease 3-like protein 2 (RTL2) from Arabidopsis thaliana (Mouse-ear cress).